A 523-amino-acid polypeptide reads, in one-letter code: Transmembrane protein 266 (523 aa).

Over Met-1–Ser-94 the chain is Cytoplasmic. The chain crosses the membrane as a helical span at residues Phe-95–Ile-115. At Lys-116 to Ser-121 the chain is on the extracellular side. The chain crosses the membrane as a helical span at residues Ser-122–Phe-142. Residues Ser-143–Lys-161 lie on the Cytoplasmic side of the membrane. The chain crosses the membrane as a helical span at residues Ile-162–Val-182. The Extracellular portion of the chain corresponds to Ala-183–Asp-191. Residues Ala-192–Val-212 traverse the membrane as a helical segment. Topologically, residues Leu-213–Ala-523 are cytoplasmic. Residues Glu-218 to Glu-270 are a coiled coil. The segment at Ser-380 to Phe-477 is disordered. The segment covering Ser-382 to Leu-397 has biased composition (low complexity). The span at Gly-398–Ser-411 shows a compositional bias: polar residues. The span at Leu-421–Ala-430 shows a compositional bias: pro residues.

As to quaternary structure, homodimer; disulfide-linked. In terms of tissue distribution, mainly expressed in the cerebellum. Also expressed in cerebral cortex, skeletal muscle and thyroid, but at much lower levels.

The protein resides in the cell membrane. The protein localises to the cell projection. It is found in the dendrite. It localises to the perikaryon. Its function is as follows. Voltage-sensor protein present on the post-synaptic side of glutamatergic mossy fibers and granule cells in the cerebellum. Despite the presence of a voltage-sensor segment, does not form a functional ion channel and its precise role remains unclear. Undergoes both rapid and slow structural rearrangements in response to changes in voltage. Contains a zinc-binding site that can regulate the slow conformational transition. This Homo sapiens (Human) protein is Transmembrane protein 266.